The chain runs to 268 residues: Nickel import ATP-binding protein NikE (268 aa).

One can recognise an ABC transporter domain in the interval 4–252; it reads LNVSGLSHHY…SSDAGRVLQN (249 aa). An ATP-binding site is contributed by 45-52; sequence GRSGCGKS.

Belongs to the ABC transporter superfamily. Nickel importer (TC 3.A.1.5.3) family. In terms of assembly, the complex is composed of two ATP-binding proteins (NikD and NikE), two transmembrane proteins (NikB and NikC) and a solute-binding protein (NikA).

Its subcellular location is the cell inner membrane. The catalysed reaction is Ni(2+)(out) + ATP + H2O = Ni(2+)(in) + ADP + phosphate + H(+). In terms of biological role, part of the ABC transporter complex NikABCDE involved in nickel import. Responsible for energy coupling to the transport system. The sequence is that of Nickel import ATP-binding protein NikE from Shigella boydii serotype 4 (strain Sb227).